The chain runs to 76 residues: MDIVTLAEVAGNLNVVGYGLAAIGPGIGLGILIGKTIESTARQPELGGRLQTLMFLGLAFVEVLALLGFVAAFIFQ.

A run of 2 helical transmembrane segments spans residues 13–33 (LNVVGYGLAAIGPGIGLGILI) and 55–75 (FLGLAFVEVLALLGFVAAFIF).

This sequence belongs to the ATPase C chain family. In terms of assembly, F-type ATPases have 2 components, F(1) - the catalytic core - and F(0) - the membrane proton channel. F(1) has five subunits: alpha(3), beta(3), gamma(1), delta(1), epsilon(1). F(0) has three main subunits: a(1), b(2) and c(10-14). The alpha and beta chains form an alternating ring which encloses part of the gamma chain. F(1) is attached to F(0) by a central stalk formed by the gamma and epsilon chains, while a peripheral stalk is formed by the delta and b chains.

The protein localises to the cell membrane. F(1)F(0) ATP synthase produces ATP from ADP in the presence of a proton or sodium gradient. F-type ATPases consist of two structural domains, F(1) containing the extramembraneous catalytic core and F(0) containing the membrane proton channel, linked together by a central stalk and a peripheral stalk. During catalysis, ATP synthesis in the catalytic domain of F(1) is coupled via a rotary mechanism of the central stalk subunits to proton translocation. Its function is as follows. Key component of the F(0) channel; it plays a direct role in translocation across the membrane. A homomeric c-ring of between 10-14 subunits forms the central stalk rotor element with the F(1) delta and epsilon subunits. The sequence is that of ATP synthase subunit c from Bifidobacterium animalis subsp. lactis (strain AD011).